Consider the following 183-residue polypeptide: Ras-related protein Rap-2a (183 aa).

10–17 (GSGGVGKS) is a GTP binding site. Residues 32–40 (YDPTIEDFY) carry the Effector region motif. Residues 57–61 (DTAGT) and 116–119 (NKVD) each bind GTP. S-palmitoyl cysteine attachment occurs at residues Cys-176 and Cys-177. Cys-180 bears the Cysteine methyl ester mark. Residue Cys-180 is the site of S-farnesyl cysteine attachment. The propeptide at 181-183 (NIQ) is removed in mature form.

The protein belongs to the small GTPase superfamily. Ras family. As to quaternary structure, interacts with PLCE1. Interacts with ARHGAP29, SGSM1, SGSM2 and SGSM3. Interacts (GTP-bound form preferentially) with MAP4K4. Interacts with MINK1. Interacts with cytoskeletal actin. Interacts (GTP-bound form) with RUNDC3A. Interacts (GTP-bound form preferentially) with TNIK (via the CNH domain); the interaction is direct and recruits RAP2A to the E3 ubiquitin ligase NEDD4. Interacts with RGS14; the interaction is GTP-dependent. In terms of processing, ubiquitinated; undergoes 'Lys-63' monoubiquitination and diubiquitination by NEDD4. Multiple lysine residues are probably modified. Ubiquitination requires TNIK, prevents interaction with effectors and inactivates RAP2A. Ubiquitination by the ECS(RAB40B) complex leads to RAP2A localization to lamellipodia plasma membrane, activation, and regulation of sorting at early endosomes for recycling to the lamellipodia plasma membrane. Post-translationally, palmitoylated. Palmitoylation is required for association with recycling endosome membranes and activation of TNIK. Expressed in granular layer of the cerebellum, forebrain, striatum, layer V of the cortex, olfactory cortex, tubercules, subthalamic and hippocampus, particularly in the CA2 region, to a lesser extent in the CA1 region and the external layer of the dentate gyrus. Expressed in neurons.

The protein resides in the midbody. The protein localises to the cell projection. It is found in the lamellipodium membrane. Its subcellular location is the golgi apparatus. It localises to the recycling endosome membrane. The protein resides in the lysosome. It catalyses the reaction GTP + H2O = GDP + phosphate + H(+). Activated by the guanine nucleotide-exchange factors RAPGEF3 and RAPGEF4 in a cAMP-dependent manner. Nucleotide exchange is also specifically stimulated by RAPGEF5, RASGEF1A and RASGEF1B. Small GTP-binding protein which cycles between a GDP-bound inactive and a GTP-bound active form. In its active form interacts with and regulates several effectors including MAP4K4, MINK1 and TNIK. Part of a signaling complex composed of NEDD4, RAP2A and TNIK which regulates neuronal dendrite extension and arborization during development. More generally, it is part of several signaling cascades and may regulate cytoskeletal rearrangements, cell migration, cell adhesion and cell spreading. This is Ras-related protein Rap-2a from Mus musculus (Mouse).